Consider the following 262-residue polypeptide: Protein FLOURY 2 (262 aa).

An N-terminal signal peptide occupies residues 1–21 (MATKILALLALLALLVSATNA).

This sequence belongs to the zein family.

It localises to the endoplasmic reticulum membrane. Its function is as follows. Zeins are major seed storage proteins. In Zea mays (Maize), this protein is Protein FLOURY 2.